A 347-amino-acid chain; its full sequence is Phosphoribosylformylglycinamidine cyclo-ligase (347 aa).

This sequence belongs to the AIR synthase family.

The protein localises to the cytoplasm. The catalysed reaction is 2-formamido-N(1)-(5-O-phospho-beta-D-ribosyl)acetamidine + ATP = 5-amino-1-(5-phospho-beta-D-ribosyl)imidazole + ADP + phosphate + H(+). Its pathway is purine metabolism; IMP biosynthesis via de novo pathway; 5-amino-1-(5-phospho-D-ribosyl)imidazole from N(2)-formyl-N(1)-(5-phospho-D-ribosyl)glycinamide: step 2/2. This is Phosphoribosylformylglycinamidine cyclo-ligase from Prochlorococcus marinus (strain MIT 9312).